A 133-amino-acid chain; its full sequence is Putative pre-16S rRNA nuclease (133 aa).

This sequence belongs to the YqgF nuclease family.

It localises to the cytoplasm. Its function is as follows. Could be a nuclease involved in processing of the 5'-end of pre-16S rRNA. The polypeptide is Putative pre-16S rRNA nuclease (Dehalococcoides mccartyi (strain ATCC BAA-2266 / KCTC 15142 / 195) (Dehalococcoides ethenogenes (strain 195))).